We begin with the raw amino-acid sequence, 745 residues long: Serine/threonine-protein kinase GG21441 (745 aa).

Residues arginine 49 to threonine 73 are disordered. The span at lysine 57 to aspartate 67 shows a compositional bias: basic and acidic residues. Doublecortin domains are found at residues leucine 159–asparagine 245 and arginine 315–phenylalanine 398. A Protein kinase domain is found at tyrosine 479–threonine 737. ATP contacts are provided by residues isoleucine 485–valine 493 and lysine 508. Aspartate 600 serves as the catalytic Proton acceptor.

It belongs to the protein kinase superfamily. CAMK Ser/Thr protein kinase family. CaMK subfamily.

It catalyses the reaction L-seryl-[protein] + ATP = O-phospho-L-seryl-[protein] + ADP + H(+). The catalysed reaction is L-threonyl-[protein] + ATP = O-phospho-L-threonyl-[protein] + ADP + H(+). This is Serine/threonine-protein kinase GG21441 from Drosophila erecta (Fruit fly).